The following is a 519-amino-acid chain: MKYKDLRDFIHSLEQRGELRRITQPVSPALEMTELCDRVLRAGGPALLFDAPDGYRFPVLGNLFGTPRRVALGMGVDADDNATLASLRDIGRLLSALKEPDPPKSLKDAGKLLSLAKAVWDMGPKTVSAPPCQEIVWEGDDVDLHKLPIQTCWPGDAGPLLTWGLTVTRGPNKTRQNLGIYRQQLIGRNKLIMRWLAHRGGALDFREFALKHPGQPYPVAVVLGADPATALGAVTPVPDTLSEYQFAGLLRGARTELAKCLTPGVDTLQVPARAEIVLEGFIHPQQGAPAPAPEGAPPRPTAGAAAGYEHALEGPYGDHTGYYNEQEWFPVFTVERITMRRDAIYHSTYTGKPPDEPAVLGVALNEVFVPLLQKQFSEITDFYLPPEGCSYRMAIVQMKKSYAGHAKRVMFGVWSFLRQFMYTKFIVVVDEDVNVRDWKEVIWAITTRVDPARDTVLVENTPIDYLDFASPVAGLGSKMGLDATNKWPGETQREWGRPIEMDAAVKARVDRLWTEIGLS.

A Mn(2+)-binding site is contributed by asparagine 177. Residues isoleucine 180–arginine 182, arginine 194–leucine 196, and arginine 199–glycine 200 each bind prenylated FMN. Residue glutamate 243 coordinates Mn(2+). The active-site Proton donor is the aspartate 318.

This sequence belongs to the UbiD family. Homohexamer. Requires prenylated FMN as cofactor. Mn(2+) is required as a cofactor.

It is found in the cell membrane. It carries out the reaction a 4-hydroxy-3-(all-trans-polyprenyl)benzoate + H(+) = a 2-(all-trans-polyprenyl)phenol + CO2. The protein operates within cofactor biosynthesis; ubiquinone biosynthesis. Functionally, catalyzes the decarboxylation of 3-octaprenyl-4-hydroxy benzoate to 2-octaprenylphenol, an intermediate step in ubiquinone biosynthesis. This chain is 3-octaprenyl-4-hydroxybenzoate carboxy-lyase, found in Burkholderia thailandensis (strain ATCC 700388 / DSM 13276 / CCUG 48851 / CIP 106301 / E264).